Here is a 204-residue protein sequence, read N- to C-terminus: Isochorismatase domain-containing protein 2 (204 aa).

It belongs to the isochorismatase family. Interacts with CDKN2A.

It localises to the cytoplasm. Its subcellular location is the nucleus. This chain is Isochorismatase domain-containing protein 2 (ISOC2), found in Bos taurus (Bovine).